Here is a 135-residue protein sequence, read N- to C-terminus: Galectin-1 (135 aa).

N-acetylalanine is present on alanine 2. The Galectin domain maps to 4–135 (GLVASNLNLK…DFKIKCVAFD (132 aa)). N6-acetyllysine occurs at positions 13 and 29. Phosphoserine is present on serine 30. A beta-D-galactoside contacts are provided by residues 45–49 (HFNPR), histidine 53, asparagine 62, and 69–72 (WGTE). Lysine 108 bears the N6-acetyllysine; alternate mark. Lysine 108 bears the N6-succinyllysine; alternate mark. The residue at position 128 (lysine 128) is an N6-acetyllysine.

As to quaternary structure, homodimer. Binds LGALS3BP. Interacts with CD2, CD3, CD4, CD6, CD7, CD43, ALCAM and CD45. Interacts with laminin (via poly-N-acetyllactosamine). Interacts with SUSD2.

The protein localises to the secreted. Its subcellular location is the extracellular space. It localises to the extracellular matrix. In terms of biological role, lectin that binds beta-galactoside and a wide array of complex carbohydrates. Plays a role in regulating apoptosis, cell proliferation and cell differentiation. Inhibits CD45 protein phosphatase activity and therefore the dephosphorylation of Lyn kinase. Strong inducer of T-cell apoptosis. The polypeptide is Galectin-1 (LGALS1) (Pongo abelii (Sumatran orangutan)).